The primary structure comprises 20 residues: Truncated non-structural protein of 4.9 kDa (20 aa).

The protein belongs to the coronaviruses ns4.9 protein family.

The chain is Truncated non-structural protein of 4.9 kDa from Sus scrofa (Pig).